The sequence spans 294 residues: UDP-3-O-acyl-N-acetylglucosamine deacetylase (294 aa).

Zn(2+) is bound by residues His75, His232, and Asp236. The active-site Proton donor is the His259.

The protein belongs to the LpxC family. Zn(2+) is required as a cofactor.

It catalyses the reaction a UDP-3-O-[(3R)-3-hydroxyacyl]-N-acetyl-alpha-D-glucosamine + H2O = a UDP-3-O-[(3R)-3-hydroxyacyl]-alpha-D-glucosamine + acetate. It participates in glycolipid biosynthesis; lipid IV(A) biosynthesis; lipid IV(A) from (3R)-3-hydroxytetradecanoyl-[acyl-carrier-protein] and UDP-N-acetyl-alpha-D-glucosamine: step 2/6. Functionally, catalyzes the hydrolysis of UDP-3-O-myristoyl-N-acetylglucosamine to form UDP-3-O-myristoylglucosamine and acetate, the committed step in lipid A biosynthesis. In Campylobacter jejuni subsp. jejuni serotype O:2 (strain ATCC 700819 / NCTC 11168), this protein is UDP-3-O-acyl-N-acetylglucosamine deacetylase.